The following is a 504-amino-acid chain: Probable cytosol aminopeptidase (504 aa).

Positions 268 and 273 each coordinate Mn(2+). Residue K280 is part of the active site. Residues D291, D350, and E352 each contribute to the Mn(2+) site. The active site involves R354.

Belongs to the peptidase M17 family. Mn(2+) is required as a cofactor.

It localises to the cytoplasm. The catalysed reaction is Release of an N-terminal amino acid, Xaa-|-Yaa-, in which Xaa is preferably Leu, but may be other amino acids including Pro although not Arg or Lys, and Yaa may be Pro. Amino acid amides and methyl esters are also readily hydrolyzed, but rates on arylamides are exceedingly low.. It carries out the reaction Release of an N-terminal amino acid, preferentially leucine, but not glutamic or aspartic acids.. In terms of biological role, presumably involved in the processing and regular turnover of intracellular proteins. Catalyzes the removal of unsubstituted N-terminal amino acids from various peptides. The protein is Probable cytosol aminopeptidase of Psychromonas ingrahamii (strain DSM 17664 / CCUG 51855 / 37).